The sequence spans 483 residues: Glycogen synthase (483 aa).

Lysine 18 is a binding site for ADP-alpha-D-glucose.

This sequence belongs to the glycosyltransferase 1 family. Bacterial/plant glycogen synthase subfamily.

The enzyme catalyses [(1-&gt;4)-alpha-D-glucosyl](n) + ADP-alpha-D-glucose = [(1-&gt;4)-alpha-D-glucosyl](n+1) + ADP + H(+). Its pathway is glycan biosynthesis; glycogen biosynthesis. Synthesizes alpha-1,4-glucan chains using ADP-glucose. This chain is Glycogen synthase, found in Methylocella silvestris (strain DSM 15510 / CIP 108128 / LMG 27833 / NCIMB 13906 / BL2).